The sequence spans 865 residues: Outer membrane usher protein HtrE (865 aa).

The N-terminal stretch at 1–29 (MTIEYTKNYHHLTRIATFCALLYCNTAFS) is a signal peptide. Cys838 and Cys862 are joined by a disulfide.

This sequence belongs to the fimbrial export usher family.

The protein localises to the cell outer membrane. Its function is as follows. Part of the yadCKLM-htrE-yadVN fimbrial operon. Could contribute to adhesion to various surfaces in specific environmental niches. Probably involved in the export and assembly of fimbrial subunits across the outer membrane. This is Outer membrane usher protein HtrE (htrE) from Escherichia coli (strain K12).